The chain runs to 458 residues: Ammonium transporter Rh type B (458 aa).

At 1–11 (MTDAATNMRLK) the chain is on the cytoplasmic side. Residues 12–32 (LPITCFILEIILIILFGTLVQ) traverse the membrane as a helical segment. Topologically, residues 33–58 (YDYETDAKEWHNTSHQDYENDFYFRY) are extracellular. A glycan (N-linked (GlcNAc...) asparagine) is linked at N44. Residues 59-79 (PSFQDVHVMIFVGFGFLMTFL) form a helical membrane-spanning segment. Over 80 to 83 (QRYG) the chain is Cytoplasmic. The chain crosses the membrane as a helical span at residues 84-104 (FGSVGFNFLIAAFSLQWATLM). Residues 105-121 (QGFFHGMHGGKIHIGVE) lie on the Extracellular side of the membrane. The helical transmembrane segment at 122–142 (SMINADFCTGSVLISFGAVLG) threads the bilayer. The Cytoplasmic segment spans residues 143–151 (KTSPIQLLT). The chain crosses the membrane as a helical span at residues 152–172 (MAIFEVTLFAVNEFILLSLLG). Topologically, residues 173–176 (TKDA) are extracellular. A helical transmembrane segment spans residues 177–197 (GGSMTIHTFGAYFGLMVTRIL). The Cytoplasmic segment spans residues 198–216 (YRPNLDKSKHRNSSVYHSD). A helical transmembrane segment spans residues 217-237 (LFAMIGTVYLWMFWPSFNSAI). Residues 238-247 (TAHGDDQHRT) lie on the Extracellular side of the membrane. Residues 248–270 (ALNTYYSLAACTLATYGMSAITS) form a helical membrane-spanning segment. At 271-274 (HDGK) the chain is on the cytoplasmic side. A helical membrane pass occupies residues 275–295 (LDMVHIQNAALAGGVAVGTAG). Residues 296–298 (EMM) are Extracellular-facing. The helical transmembrane segment at 299–319 (LTPFGSMIVGFMAGIISVLGF) threads the bilayer. At 320–340 (KFLSPILEDKLKIQDTCGIHN) the chain is on the cytoplasmic side. A helical membrane pass occupies residues 341–361 (LHGMPGVLGAIVGAVTAALAT). Residues 362–391 (TDVYGQGMADVFPAVADGSVNATKQGGIQA) are Extracellular-facing. The chain crosses the membrane as a helical span at residues 392–412 (LSLAITLGIAVLGGLIVGFVL). Residues 413-458 (KLPVFGTPPDTLCFEDSVYWEVPGSESPEEGELTSVKPEETEHLNS) are Cytoplasmic-facing. The segment at 436–458 (GSESPEEGELTSVKPEETEHLNS) is disordered. Over residues 449–458 (KPEETEHLNS) the composition is skewed to basic and acidic residues.

Belongs to the ammonium transporter (TC 2.A.49) family. Rh subfamily. In terms of tissue distribution, specifically expressed in the gill by pavement cells (at protein level).

Its subcellular location is the apicolateral cell membrane. It localises to the cytoplasmic vesicle membrane. Functions as an ammonia transporter. May play a role in the elimination of ammonia in the gill. This is Ammonium transporter Rh type B (rhbg) from Takifugu rubripes (Japanese pufferfish).